Here is a 401-residue protein sequence, read N- to C-terminus: S-adenosylmethionine synthase (401 aa).

An ATP-binding site is contributed by Gly136–Asp141.

Belongs to the AdoMet synthase 2 family. It depends on Mg(2+) as a cofactor.

It carries out the reaction L-methionine + ATP + H2O = S-adenosyl-L-methionine + phosphate + diphosphate. It participates in amino-acid biosynthesis; S-adenosyl-L-methionine biosynthesis; S-adenosyl-L-methionine from L-methionine: step 1/1. Functionally, catalyzes the formation of S-adenosylmethionine from methionine and ATP. This Pyrococcus horikoshii (strain ATCC 700860 / DSM 12428 / JCM 9974 / NBRC 100139 / OT-3) protein is S-adenosylmethionine synthase (mat).